Reading from the N-terminus, the 359-residue chain is 1-deoxy-D-xylulose 5-phosphate reductoisomerase (359 aa).

NADPH contacts are provided by Thr7, Gly8, Ser9, Ile10, Gly31, Lys32, Asn33, and Asn111. Residue Lys112 participates in 1-deoxy-D-xylulose 5-phosphate binding. An NADPH-binding site is contributed by Glu113. Asp131 provides a ligand contact to Mn(2+). 1-deoxy-D-xylulose 5-phosphate is bound by residues Ser132, Glu133, Ser155, and His178. Glu133 is a binding site for Mn(2+). Residue Gly184 coordinates NADPH. Ser191, Asn196, Lys197, and Glu200 together coordinate 1-deoxy-D-xylulose 5-phosphate. Glu200 contributes to the Mn(2+) binding site.

This sequence belongs to the DXR family. The cofactor is Mg(2+). It depends on Mn(2+) as a cofactor.

It catalyses the reaction 2-C-methyl-D-erythritol 4-phosphate + NADP(+) = 1-deoxy-D-xylulose 5-phosphate + NADPH + H(+). It participates in isoprenoid biosynthesis; isopentenyl diphosphate biosynthesis via DXP pathway; isopentenyl diphosphate from 1-deoxy-D-xylulose 5-phosphate: step 1/6. Catalyzes the NADPH-dependent rearrangement and reduction of 1-deoxy-D-xylulose-5-phosphate (DXP) to 2-C-methyl-D-erythritol 4-phosphate (MEP). The protein is 1-deoxy-D-xylulose 5-phosphate reductoisomerase of Campylobacter lari (strain RM2100 / D67 / ATCC BAA-1060).